The chain runs to 411 residues: Putative ion-transport protein YfeO (411 aa).

Helical transmembrane passes span 9-29 (MLLLSLPALIIGVASSLVLIA), 54-74 (DSPFWIVGMLTLTGIVVGLII), 99-119 (ALPGLLLALIIGLAGGVSLGP), 149-169 (ILASAGTIGALFGTPVAAALI), 186-206 (LFAPLMAAAAGSLTTSLFFHP), 223-243 (IASGAIVAAIAIAAGMVAVWC), 258-278 (VLILGIGGFILGILGVIGGPL), 296-316 (LGAGDYFTLAVVKLAALVIAA), 322-342 (GGRIFPAVFIGAALGLMLHAH), 343-363 (VEAVPAAITVSCAILGLVLVV), and 386-406 (LLCIVMLPAWLLLAGKPLLAA).

The protein belongs to the chloride channel (TC 2.A.49) family.

It localises to the cell membrane. This Salmonella paratyphi A (strain ATCC 9150 / SARB42) protein is Putative ion-transport protein YfeO.